The following is a 389-amino-acid chain: Succinate--CoA ligase [ADP-forming] subunit beta (389 aa).

In terms of domain architecture, ATP-grasp spans 9–236; the sequence is KELFAKHNVP…KDATDPLELK (228 aa). Residues Lys45, 52 to 54, Ser94, and Glu99 contribute to the ATP site; that span reads GRG. Mg(2+)-binding residues include Asn191 and Asp205. Substrate-binding positions include Asn256 and 318–320; that span reads GIT.

It belongs to the succinate/malate CoA ligase beta subunit family. In terms of assembly, heterotetramer of two alpha and two beta subunits. Requires Mg(2+) as cofactor.

The catalysed reaction is succinate + ATP + CoA = succinyl-CoA + ADP + phosphate. The enzyme catalyses GTP + succinate + CoA = succinyl-CoA + GDP + phosphate. The protein operates within carbohydrate metabolism; tricarboxylic acid cycle; succinate from succinyl-CoA (ligase route): step 1/1. Succinyl-CoA synthetase functions in the citric acid cycle (TCA), coupling the hydrolysis of succinyl-CoA to the synthesis of either ATP or GTP and thus represents the only step of substrate-level phosphorylation in the TCA. The beta subunit provides nucleotide specificity of the enzyme and binds the substrate succinate, while the binding sites for coenzyme A and phosphate are found in the alpha subunit. This Mycobacteroides abscessus (strain ATCC 19977 / DSM 44196 / CCUG 20993 / CIP 104536 / JCM 13569 / NCTC 13031 / TMC 1543 / L948) (Mycobacterium abscessus) protein is Succinate--CoA ligase [ADP-forming] subunit beta.